Reading from the N-terminus, the 1729-residue chain is 182 kDa tankyrase-1-binding protein (1729 aa).

Over residues 1-12 (MKVSTLRESSAM) the composition is skewed to polar residues. Positions 1-151 (MKVSTLRESS…VRKAPAPFRP (151 aa)) are disordered. A Phosphoserine modification is found at Ser-14. The span at 46-63 (ALPAKPALPAKPSLLVPV) shows a compositional bias: low complexity. Basic and acidic residues predominate over residues 117–127 (TGKEEAGKEEP). Thr-131 is modified (phosphothreonine). Phosphoserine occurs at positions 178, 221, and 228. Disordered regions lie at residues 184–450 (GSRL…LAAL), 484–603 (PSGL…ESPL), and 657–880 (ETTQ…SSRD). The tract at residues 210-1572 (DEDGSTLFRG…TEILDSAMYR (1363 aa)) is acidic. Positions 230–245 (AECREEHSKTPEERSL) are enriched in basic and acidic residues. Thr-239 carries the post-translational modification Phosphothreonine. 2 positions are modified to phosphoserine: Ser-287 and Ser-301. A compositionally biased stretch (low complexity) spans 352–363 (PSPGLPAEGAPE). Residues 364–374 (APRPSSPPPEV) show a composition bias toward pro residues. Residues Ser-429, Ser-435, Ser-437, Ser-494, and Ser-498 each carry the phosphoserine modification. Composition is skewed to low complexity over residues 500-512 (ITEASEAAEAAEA), 524-541 (VSQQGQGAGSAPSGSGSS), and 572-583 (LPTTEGTPGLPL). Position 501 is a phosphothreonine (Thr-501). Phosphoserine occurs at positions 601, 672, 691, 695, 712, 724, 744, 762, and 806. Over residues 738-753 (PQPSSFSPSSWCQGAS) the composition is skewed to polar residues. Polar residues predominate over residues 803-812 (ASSSQDQSKV). The residue at position 833 (Thr-833) is a Phosphothreonine. Phosphoserine occurs at positions 836, 851, 872, 877, 882, and 893. The span at 858–872 (RDAELQDQEFGKRDS) shows a compositional bias: basic and acidic residues. Tyr-897 is subject to Phosphotyrosine. Positions 897 to 1083 (YASQDANEQG…ADLEDGEMGK (187 aa)) are disordered. Residues Ser-899, Ser-920, Ser-936, and Ser-976 each carry the phosphoserine modification. Phosphothreonine is present on Thr-979. Residues Ser-983, Ser-987, Ser-1004, Ser-1008, Ser-1013, Ser-1024, Ser-1029, Ser-1054, Ser-1073, Ser-1091, Ser-1103, Ser-1133, Ser-1138, Ser-1158, Ser-1178, Ser-1248, and Ser-1253 each carry the phosphoserine modification. Residues 1012–1021 (GSRDAGRPGE) are compositionally biased toward basic and acidic residues. A compositionally biased stretch (polar residues) spans 1043 to 1054 (RDQSSWQNSDAS). The interval 1240–1302 (EVGEGGGHSQ…GAVCSPGESK (63 aa)) is disordered. Phosphothreonine is present on Thr-1282. Residues Ser-1297, Ser-1328, Ser-1331, Ser-1383, and Ser-1385 each carry the phosphoserine modification. Positions 1362-1561 (AREHGVGGVS…SPSQDFSFIE (200 aa)) are disordered. Residues 1389–1400 (EARDPLEARELG) show a composition bias toward basic and acidic residues. A compositionally biased stretch (polar residues) spans 1406-1419 (GPETQGEDYSSSSL). Phosphoserine is present on residues Ser-1435, Ser-1439, Ser-1450, Ser-1452, Ser-1473, Ser-1476, Ser-1503, and Ser-1506. Residues 1450-1542 (SGSQGLLEEM…SDQGPAQTSR (93 aa)) form a tankyrase-binding region. Residue Thr-1518 is modified to Phosphothreonine. Phosphoserine is present on residues Ser-1533, Ser-1545, and Ser-1558. Thr-1563 carries the post-translational modification Phosphothreonine. Positions 1575–1729 (ANLGRKRGHR…QALKLKKKKV (155 aa)) are disordered. Positions 1577–1586 (LGRKRGHRAP) are enriched in basic residues. Over residues 1602–1615 (SDAHLFQDSTEPRA) the composition is skewed to basic and acidic residues. Ser-1620, Ser-1621, and Ser-1631 each carry phosphoserine. The Nuclear localization signal motif lies at 1629–1635 (PQSRRTR). Lys-1644 carries the post-translational modification N6-methyllysine. Residues Ser-1652, Ser-1666, and Ser-1715 each carry the phosphoserine modification. A compositionally biased stretch (basic and acidic residues) spans 1665-1679 (RSAEEGELAESKSSQ). The Nuclear localization signal signature appears at 1723–1729 (KLKKKKV).

In terms of assembly, binds to the ANK repeat domain of TNKS1 and TNKS2. ADP-ribosylated by TNKS1 (in vitro). As to expression, detected in testis, ovary, lung, skeletal muscle, heart, prostate and pancreas, and at very low levels in brain and peripheral blood leukocytes.

Its subcellular location is the nucleus. The protein resides in the cytoplasm. It localises to the cytoskeleton. It is found in the chromosome. This is 182 kDa tankyrase-1-binding protein (TNKS1BP1) from Homo sapiens (Human).